The following is a 48-amino-acid chain: Large ribosomal subunit protein eL40 (48 aa).

Belongs to the eukaryotic ribosomal protein eL40 family.

This Methanoregula boonei (strain DSM 21154 / JCM 14090 / 6A8) protein is Large ribosomal subunit protein eL40.